The following is a 245-amino-acid chain: Glucan endo-1,3-beta-glucosidase (245 aa).

The signal sequence occupies residues Met1 to Ala23. Cystine bridges form between Cys32/Cys244, Cys80/Cys90, Cys95/Cys102, Cys150/Cys233, Cys155/Cys216, Cys163/Cys179, Cys183/Cys192, and Cys193/Cys203.

The protein belongs to the thaumatin family. As to expression, abundantly expressed in ripening fruit.

The protein resides in the secreted. It catalyses the reaction Hydrolysis of (1-&gt;3)-beta-D-glucosidic linkages in (1-&gt;3)-beta-D-glucans.. This Prunus avium (Cherry) protein is Glucan endo-1,3-beta-glucosidase.